Here is a 369-residue protein sequence, read N- to C-terminus: Glutamate 5-kinase (369 aa).

Lys9 is a binding site for ATP. Residues Ser49, Asp136, and Asn148 each contribute to the substrate site. ATP is bound by residues 168–169 and 210–216; these read TD and TGGMLTK. The PUA domain occupies 275–355; sequence QGSIWVDKGA…KGVLIYRDDW (81 aa).

The protein belongs to the glutamate 5-kinase family.

The protein localises to the cytoplasm. The enzyme catalyses L-glutamate + ATP = L-glutamyl 5-phosphate + ADP. It participates in amino-acid biosynthesis; L-proline biosynthesis; L-glutamate 5-semialdehyde from L-glutamate: step 1/2. Catalyzes the transfer of a phosphate group to glutamate to form L-glutamate 5-phosphate. The chain is Glutamate 5-kinase from Streptococcus pneumoniae serotype 4 (strain ATCC BAA-334 / TIGR4).